A 508-amino-acid chain; its full sequence is Protein O-glucosyltransferase 3 (508 aa).

An N-terminal signal peptide occupies residues 1 to 24 (MLGVRRALLLPPLQLALLVAAGTG). The Filamin repeat unit spans residues 25–134 (ARVSAPRSLA…VAQSPYILKG (110 aa)). Asn307 carries an N-linked (GlcNAc...) asparagine glycan. The interval 480-508 (RDGMERVPQPDDSTSVRQCHRKRPEREEL) is disordered. Positions 505–508 (REEL) match the Prevents secretion from ER motif.

Belongs to the KDELC family.

The protein localises to the endoplasmic reticulum lumen. It catalyses the reaction L-seryl-[EGF-like domain protein] + UDP-alpha-D-glucose = 3-O-(beta-D-glucosyl)-L-seryl-[EGF-like domain protein] + UDP + H(+). The enzyme catalyses L-seryl-[EGF-like domain protein] + UDP-alpha-D-xylose = 3-O-(beta-D-xylosyl)-L-seryl-[EGF-like domain protein] + UDP + H(+). The protein operates within protein modification; protein glycosylation. In terms of biological role, protein glucosyltransferase that catalyzes the transfer of glucose from UDP-glucose to a serine residue within the consensus sequence peptide C-X-N-T-X-G-S-F-X-C. Can also catalyze the transfer of xylose from UDP-xylose but less efficiently. Specifically targets extracellular EGF repeats of proteins such as NOTCH1, NOTCH3, FBN1, FBN2 and LTBP1. May regulate the transport of NOTCH1 and NOTCH3 to the plasma membrane and thereby the Notch signaling pathway. This is Protein O-glucosyltransferase 3 (Poglut3) from Rattus norvegicus (Rat).